The chain runs to 132 residues: Nickel-responsive regulator (132 aa).

The Ni(2+) site is built by H76, H87, H89, and C95.

The protein belongs to the transcriptional regulatory CopG/NikR family. As to quaternary structure, homotetramer. Ni(2+) serves as cofactor.

Transcriptional repressor of the nikABCDE operon. Is active in the presence of excessive concentrations of intracellular nickel. In Klebsiella pneumoniae (strain 342), this protein is Nickel-responsive regulator.